Consider the following 578-residue polypeptide: Penicillin-binding protein activator LpoA (578 aa).

The signal sequence occupies residues 1–30; the sequence is MPTILVQSYGFRQKMKTIFIPTALALLLAA. Residue cysteine 31 is the site of N-palmitoyl cysteine attachment. Cysteine 31 carries S-diacylglycerol cysteine lipidation.

It belongs to the LpoA family. Interacts with PBP1a.

It localises to the cell outer membrane. Functionally, regulator of peptidoglycan synthesis that is essential for the function of penicillin-binding protein 1A (PBP1a). This Glaesserella parasuis serovar 5 (strain SH0165) (Haemophilus parasuis) protein is Penicillin-binding protein activator LpoA.